A 393-amino-acid chain; its full sequence is Succinate--CoA ligase [ADP-forming] subunit beta (393 aa).

In terms of domain architecture, ATP-grasp spans 9-251; the sequence is KALFEKFGVL…LNEEDPKEIE (243 aa). ATP-binding positions include lysine 46, 53–55, serine 109, and glutamate 114; that span reads GRG. 2 residues coordinate Mg(2+): asparagine 206 and aspartate 220. Substrate contacts are provided by residues asparagine 271 and 328–330; that span reads GIM.

This sequence belongs to the succinate/malate CoA ligase beta subunit family. As to quaternary structure, heterotetramer of two alpha and two beta subunits. Requires Mg(2+) as cofactor.

It carries out the reaction succinate + ATP + CoA = succinyl-CoA + ADP + phosphate. It catalyses the reaction GTP + succinate + CoA = succinyl-CoA + GDP + phosphate. The protein operates within carbohydrate metabolism; tricarboxylic acid cycle; succinate from succinyl-CoA (ligase route): step 1/1. Functionally, succinyl-CoA synthetase functions in the citric acid cycle (TCA), coupling the hydrolysis of succinyl-CoA to the synthesis of either ATP or GTP and thus represents the only step of substrate-level phosphorylation in the TCA. The beta subunit provides nucleotide specificity of the enzyme and binds the substrate succinate, while the binding sites for coenzyme A and phosphate are found in the alpha subunit. In Opitutus terrae (strain DSM 11246 / JCM 15787 / PB90-1), this protein is Succinate--CoA ligase [ADP-forming] subunit beta.